A 335-amino-acid polypeptide reads, in one-letter code: Ubiquinone biosynthesis protein COQ4, mitochondrial (335 aa).

The N-terminal 10 residues, 1 to 10 (MLRLSLLRST), are a transit peptide targeting the mitochondrion. Zn(2+)-binding residues include His-210, Asp-211, His-214, and Glu-226.

This sequence belongs to the COQ4 family. Component of a multi-subunit COQ enzyme complex, composed of at least COQ3, COQ4, COQ5, COQ6, COQ7 and COQ9. Interacts with COQ3. The cofactor is Zn(2+).

Its subcellular location is the mitochondrion inner membrane. It catalyses the reaction 4-hydroxy-3-methoxy-5-(all-trans-hexaprenyl)benzoate + H(+) = 2-methoxy-6-(all-trans-hexaprenyl)phenol + CO2. It functions in the pathway cofactor biosynthesis; ubiquinone biosynthesis. In terms of biological role, lyase that catalyzes the C1-decarboxylation of 4-hydroxy-3-methoxy-5-(all-trans-hexaprenyl)benzoic acid into 2-methoxy-6-(all-trans-hexaprenyl)phenol during ubiquinone biosynthesis. The protein is Ubiquinone biosynthesis protein COQ4, mitochondrial of Saccharomyces cerevisiae (strain AWRI1631) (Baker's yeast).